Here is a 280-residue protein sequence, read N- to C-terminus: Small ribosomal subunit protein uS2 (280 aa).

Belongs to the universal ribosomal protein uS2 family.

The protein is Small ribosomal subunit protein uS2 of Desulforapulum autotrophicum (strain ATCC 43914 / DSM 3382 / VKM B-1955 / HRM2) (Desulfobacterium autotrophicum).